Consider the following 218-residue polypeptide: Trichothecene biosynthesis transcription regulator TRI6 (218 aa).

The disordered stretch occupies residues 154–181 (SQSTNDPGDAGKKGFATRKDRARHEAKH). Residues 162 to 176 (DAGKKGFATRKDRAR) are compositionally biased toward basic and acidic residues. The C2H2-type zinc finger occupies 185–215 (IRCQWRDNNGDQCTRTFSRMDNMRDHFRRIH).

The protein localises to the nucleus. In terms of biological role, transcriptional activator of part of the trichothecene biosynthesis cluster that mediates the production of the antimicrobial trichothecene harzianum A (HA) that plays a role in Botrytis cinerea antagonistic activity and plant defense priming. Regulates expression of both trichothecene and mevalonate pathway genes. This chain is Trichothecene biosynthesis transcription regulator TRI6, found in Trichoderma arundinaceum.